We begin with the raw amino-acid sequence, 380 residues long: GATOR1 complex protein NPRL2 (380 aa).

An interaction with PDPK1 region spans residues M1 to T133. A GDP-binding site is contributed by R78. Residue R78 is modified to Asymmetric dimethylarginine. Residues K158 and K357 each participate in a glycyl lysine isopeptide (Lys-Gly) (interchain with G-Cter in ubiquitin) cross-link.

The protein belongs to the NPR2 family. Within the GATOR complex, component of the GATOR1 subcomplex, made of DEPDC5, NPRL2 and NPRL3. GATOR1 mediates the strong interaction of the GATOR complex with small GTPases Rag (RagA/RRAGA, RagB/RRAGB, RagC/RRAGC and/or RagD/RRAGD) heterodimers. GATOR1 interacts with GPR155/LYCHOS; interaction takes place in presence of cholesterol and prevents interaction between GATOR1 and KICSTOR. Interacts with PDPK1. Post-translationally, in the presence of abundant amino acids, ubiquitinated at Lys-158 and Lys-357 via 'Lys-6'-linked ubiquitination by the WDR24 component of the GATOR2 complex, thereby inhibiting the GATOR1 complex and promoting mTORC1 activation. Asymmetric dimethylation at Arg-78 by PRMT1 inhibits the GTPase activator activity of the GATOR1 complex and consequently inducing timely mTORC1 activation under methionine-sufficient conditions.

It localises to the lysosome membrane. In terms of biological role, catalytic component of the GATOR1 complex, a multiprotein complex that functions as an inhibitor of the amino acid-sensing branch of the mTORC1 pathway. In response to amino acid depletion, the GATOR1 complex has GTPase activating protein (GAP) activity and strongly increases GTP hydrolysis by RagA/RRAGA (or RagB/RRAGB) within heterodimeric Rag complexes, thereby turning them into their inactive GDP-bound form, releasing mTORC1 from lysosomal surface and inhibiting mTORC1 signaling. In the presence of abundant amino acids, the GATOR1 complex is ubiquitinated and inhibited by GATOR2. Within the GATOR1 complex, NPRL2 constitutes the catalytic subunit that mediates the GTPase activator activity and under methionine-sufficient conditions, the GTPase activator activity is inhibited by PRMT1 through methylation and consequently inducing timely mTORC1 activation. Suppresses Src-dependent tyrosine phosphorylation and activation of PDPK1 and its downstream signaling. Down-regulates PDPK1 kinase activity by interfering with tyrosine phosphorylation at 'Tyr-9', 'Tyr-373' and 'Tyr-376' residues. May act as a tumor suppressor. Suppresses cell growth and enhances sensitivity to various anticancer drugs. The chain is GATOR1 complex protein NPRL2 from Mus musculus (Mouse).